An 899-amino-acid chain; its full sequence is Translation initiation factor IF-2 (899 aa).

Disordered stretches follow at residues 31–227 (KKAE…ATEQ) and 240–310 (VTTS…GFDK). 2 stretches are compositionally biased toward polar residues: residues 36–47 (NVSQTEKQSLLS) and 73–87 (STLS…SKSV). Basic and acidic residues-rich tracts occupy residues 101 to 173 (SALE…EKAK), 181 to 219 (AKSE…ETNE), and 247 to 261 (RAAE…ETTG). Over residues 296–308 (PQVNAPTSMQQGF) the composition is skewed to polar residues. The tr-type G domain occupies 398–565 (SRAPVVTIMG…AILLQSEILE (168 aa)). Residues 407–414 (GHVDHGKT) form a G1 region. 407–414 (GHVDHGKT) serves as a coordination point for GTP. The tract at residues 432 to 436 (GITQH) is G2. The G3 stretch occupies residues 453-456 (DTPG). Residues 453–457 (DTPGH) and 507–510 (NKID) each bind GTP. Positions 507-510 (NKID) are G4. Residues 543–545 (SAK) are G5.

This sequence belongs to the TRAFAC class translation factor GTPase superfamily. Classic translation factor GTPase family. IF-2 subfamily.

The protein localises to the cytoplasm. Its function is as follows. One of the essential components for the initiation of protein synthesis. Protects formylmethionyl-tRNA from spontaneous hydrolysis and promotes its binding to the 30S ribosomal subunits. Also involved in the hydrolysis of GTP during the formation of the 70S ribosomal complex. This Photobacterium profundum (strain SS9) protein is Translation initiation factor IF-2.